The following is a 93-amino-acid chain: Large ribosomal subunit protein bL27 (93 aa).

Residues methionine 1–phenylalanine 9 constitute a propeptide that is removed on maturation.

The protein belongs to the bacterial ribosomal protein bL27 family. In terms of processing, the N-terminus is cleaved by ribosomal processing cysteine protease Prp.

The sequence is that of Large ribosomal subunit protein bL27 from Bacillus licheniformis (strain ATCC 14580 / DSM 13 / JCM 2505 / CCUG 7422 / NBRC 12200 / NCIMB 9375 / NCTC 10341 / NRRL NRS-1264 / Gibson 46).